Here is a 160-residue protein sequence, read N- to C-terminus: Transcription antitermination protein NusB (160 aa).

It belongs to the NusB family.

In terms of biological role, involved in transcription antitermination. Required for transcription of ribosomal RNA (rRNA) genes. Binds specifically to the boxA antiterminator sequence of the ribosomal RNA (rrn) operons. The chain is Transcription antitermination protein NusB from Rhizobium meliloti (strain 1021) (Ensifer meliloti).